Here is a 552-residue protein sequence, read N- to C-terminus: Cleavage and polyadenylation specificity factor subunit 6 (552 aa).

The tract at residues 1 to 213 (MADGVDHIDI…RGRFPGAVPG (213 aa)) is necessary for interaction with NXF1. In terms of domain architecture, RRM spans 81 to 161 (IALYIGNLTR…QNPVVTPCNK (81 aa)). Residues 81-161 (IALYIGNLTR…QNPVVTPCNK (81 aa)) form a necessary for interaction with NUDT21/CPSF5 region. Residues 81-161 (IALYIGNLTR…QNPVVTPCNK (81 aa)) are necessary for nuclear paraspeckles localization. Threonine 157 carries the phosphothreonine modification. Residues 169–180 (MQSRKTTQSGQM) are compositionally biased toward polar residues. 2 disordered regions span residues 169–411 (MQSR…PLSE) and 479–552 (GIES…YRHR). The short motif at 202 to 206 (RGRGR) is the GAR element. Over residues 207–219 (FPGAVPGGDRFPG) the composition is skewed to low complexity. Pro residues-rich tracts occupy residues 220 to 265 (PTGP…PLAG), 285 to 366 (GQPP…PPPT), and 377 to 388 (GPPPTDPYGRPP). Basic and acidic residues predominate over residues 389–404 (PYDRGDYGPPGREMDT). Phosphothreonine occurs at positions 404 and 407. Positions 404–552 (TARTPLSEAE…RDREREYRHR (149 aa)) are sufficient for nuclear speckle localization. A necessary for RNA-binding region spans residues 405–552 (ARTPLSEAEF…RDREREYRHR (148 aa)). Residues 481–552 (ESKSYGSGSR…RDREREYRHR (72 aa)) are necessary for interaction with SRSF3, SRSF7 and TRA2B/SFRS10. The arg/Ser-rich domain stretch occupies residues 491–552 (RRERSRERDH…RDREREYRHR (62 aa)). Over residues 494-504 (RSRERDHSRSR) the composition is skewed to basic and acidic residues. Phosphoserine occurs at positions 495, 501, 512, 514, and 526. Basic residues predominate over residues 505–515 (EKSRRHKSRSR). Residues 511-552 (KSRSRDRHDDYYRERSRERERHRDRDRDRDRERDREREYRHR) form a sufficient for nuclear targeting region. The segment covering 516–552 (DRHDDYYRERSRERERHRDRDRDRDRERDREREYRHR) has biased composition (basic and acidic residues).

Belongs to the RRM CPSF6/7 family. As to quaternary structure, component of the cleavage factor Im (CFIm) complex which is a heterotetramer composed of two subunits of NUDT21/CPSF5 and two subunits of CPSF6 or CPSF7 or a heterodimer of CPSF6 and CPSF7. The cleavage factor Im (CFIm) complex associates with the CPSF and CSTF complexes to promote the assembly of the core mRNA 3'-processing machinery. Associates with the exon junction complex (EJC). Associates with the 80S ribosome particle. Interacts (via the RRM domain) with NUDT21/CPSF5; this interaction is direct and enhances binding to RNA. Interacts (via Arg/Ser-rich domain) with FIP1L1 (preferentially via unphosphorylated form and Arg/Glu/Asp-rich domain); this interaction mediates, at least in part, the interaction between the CFIm and CPSF complexes and may be inhibited by CPSF6 hyper-phosphorylation. Interacts (via N-terminus) with NXF1; this interaction is direct. Interacts with SRSF3. Interacts with SRSF7. Interacts with SNRNP70. Interacts with TRA2B/SFRS10. Interacts with UPF1. Interacts with UPF3B. Interacts with VIRMA. Interacts (via Arg/Ser-rich domain) with TNPO3; promoting nuclear import of CPSF6 independently of its phosphorylation status. Interacts with YTHDC1. Phosphorylated. Phosphorylated in the Arg/Ser-rich domain by SRPK1, in vitro. In terms of processing, symmetrically dimethylated on arginine residues in the GAR motif by PRMT5 in a WDR77- and CLNS1A-dependent manner. Asymmetrically dimethylated on arginine residues in the GAR motif by PRMT1.

It is found in the nucleus. The protein resides in the nucleoplasm. The protein localises to the nucleus speckle. Its subcellular location is the cytoplasm. Functionally, component of the cleavage factor Im (CFIm) complex that functions as an activator of the pre-mRNA 3'-end cleavage and polyadenylation processing required for the maturation of pre-mRNA into functional mRNAs. CFIm contributes to the recruitment of multiprotein complexes on specific sequences on the pre-mRNA 3'-end, so called cleavage and polyadenylation signals (pA signals). Most pre-mRNAs contain multiple pA signals, resulting in alternative cleavage and polyadenylation (APA) producing mRNAs with variable 3'-end formation. The CFIm complex acts as a key regulator of cleavage and polyadenylation site choice during APA through its binding to 5'-UGUA-3' elements localized in the 3'-untranslated region (UTR) for a huge number of pre-mRNAs. CPSF6 enhances NUDT21/CPSF5 binding to 5'-UGUA-3' elements localized upstream of pA signals and promotes RNA looping, and hence activates directly the mRNA 3'-processing machinery. Plays a role in mRNA export. This chain is Cleavage and polyadenylation specificity factor subunit 6, found in Pongo abelii (Sumatran orangutan).